Consider the following 443-residue polypeptide: Threonine/serine transporter TdcC (443 aa).

Helical transmembrane passes span 22-42 (TTWT…FFPI), 44-64 (AGFG…PIAF), 97-117 (GVVI…IYGV), 140-160 (VVAL…KDLM), 163-183 (VMSY…LSLI), 207-227 (ILVT…FSPI), 259-279 (ASML…FTLS), 319-339 (ASII…LGTL), 366-386 (LSMV…PNIL), 389-409 (IEAM…MYAI), and 423-443 (DNLF…YKLF).

The protein belongs to the amino acid/polyamine transporter 2 family. SdaC/TdcC subfamily.

It localises to the cell inner membrane. It catalyses the reaction L-threonine(in) + H(+)(in) = L-threonine(out) + H(+)(out). It carries out the reaction L-serine(in) + H(+)(in) = L-serine(out) + H(+)(out). Involved in the import of threonine and serine into the cell, with the concomitant import of a proton (symport system). The polypeptide is Threonine/serine transporter TdcC (Klebsiella pneumoniae (strain 342)).